Reading from the N-terminus, the 442-residue chain is MGGDIHLCSMILGKNHLIFLYFANLFGSTLSFLATIITIVFYLVKKYIQNKSFRENPHQYCHQHQYFDSSKLNEINNSGVGSYSSTPISIQNNNNKNNNLPKQKNNEKQPLINKNHNNYCNYSTSATSSSSSSSSFSSTNSGSSYEYQQPQKNQQTLSSSDKNNTIPSTNTKYEIELSIPQFKGNKCGPNCLLFSNIPQIKNALEQKKNPKKIDTLIFYLSISDFIAVSGIIIEQLIIIFNKEISKSIGFCIGERVSIHFGLLATLFWSNCIAYYLLRETYELKPYNIRFVYFHIVCWGMALIGVASLFFSKIITVSNIDQGGSWCSVSSSYQLYFWVIPLFVSFTWNLICYCLIYRKFNKIIGIYGIQSVQIKTIIIRKLSFYLLAFLITWVWDVINNSIFLYEGKCPPFALWILQEFFSSGYGFFNSLAYAVTTRFYSRK.

The Extracellular portion of the chain corresponds to 1–16 (MGGDIHLCSMILGKNH). Residues 17–37 (LIFLYFANLFGSTLSFLATII) form a helical membrane-spanning segment. Residues 38–219 (TIVFYLVKKY…PKKIDTLIFY (182 aa)) are Cytoplasmic-facing. A disordered region spans residues 83 to 166 (YSSTPISIQN…LSSSDKNNTI (84 aa)). Residues 91 to 103 (QNNNNKNNNLPKQ) show a composition bias toward low complexity. Positions 112-122 (INKNHNNYCNY) are enriched in polar residues. The segment covering 123 to 144 (STSATSSSSSSSSFSSTNSGSS) has biased composition (low complexity). A compositionally biased stretch (polar residues) spans 145 to 166 (YEYQQPQKNQQTLSSSDKNNTI). A helical membrane pass occupies residues 220 to 240 (LSISDFIAVSGIIIEQLIIIF). At 241-255 (NKEISKSIGFCIGER) the chain is on the extracellular side. A helical membrane pass occupies residues 256–276 (VSIHFGLLATLFWSNCIAYYL). Over 277 to 289 (LRETYELKPYNIR) the chain is Cytoplasmic. Residues 290–310 (FVYFHIVCWGMALIGVASLFF) traverse the membrane as a helical segment. Over 311–334 (SKIITVSNIDQGGSWCSVSSSYQL) the chain is Extracellular. A helical membrane pass occupies residues 335–355 (YFWVIPLFVSFTWNLICYCLI). Topologically, residues 356-382 (YRKFNKIIGIYGIQSVQIKTIIIRKLS) are cytoplasmic. Residues 383–403 (FYLLAFLITWVWDVINNSIFL) form a helical membrane-spanning segment. Topologically, residues 404–410 (YEGKCPP) are extracellular. A helical transmembrane segment spans residues 411–431 (FALWILQEFFSSGYGFFNSLA). At 432–442 (YAVTTRFYSRK) the chain is on the cytoplasmic side.

This sequence belongs to the G-protein coupled receptor 5 family.

Its subcellular location is the membrane. Its function is as follows. Receptor for cAMP. In Dictyostelium discoideum (Social amoeba), this protein is Cyclic AMP receptor-like protein B (crlB).